The chain runs to 318 residues: Deoxyribose-phosphate aldolase (318 aa).

The active-site Proton donor/acceptor is the aspartate 155. The Schiff-base intermediate with acetaldehyde role is filled by lysine 218. Catalysis depends on lysine 254, which acts as the Proton donor/acceptor.

It belongs to the DeoC/FbaB aldolase family. DeoC type 2 subfamily. Interacts with YBX1.

Its subcellular location is the cytoplasm. The protein localises to the cytoplasmic granule. It localises to the nucleus. It carries out the reaction 2-deoxy-D-ribose 5-phosphate = D-glyceraldehyde 3-phosphate + acetaldehyde. It functions in the pathway carbohydrate degradation; 2-deoxy-D-ribose 1-phosphate degradation; D-glyceraldehyde 3-phosphate and acetaldehyde from 2-deoxy-alpha-D-ribose 1-phosphate: step 2/2. Its function is as follows. Catalyzes a reversible aldol reaction between acetaldehyde and D-glyceraldehyde 3-phosphate to generate 2-deoxy-D-ribose 5-phosphate. Participates in stress granule (SG) assembly. May allow ATP production from extracellular deoxyinosine in conditions of energy deprivation. In Mus musculus (Mouse), this protein is Deoxyribose-phosphate aldolase (Dera).